A 444-amino-acid chain; its full sequence is Methylenetetrahydrofolate--tRNA-(uracil-5-)-methyltransferase TrmFO (444 aa).

10–15 (GAGLAG) provides a ligand contact to FAD.

It belongs to the MnmG family. TrmFO subfamily. FAD serves as cofactor.

The protein localises to the cytoplasm. The catalysed reaction is uridine(54) in tRNA + (6R)-5,10-methylene-5,6,7,8-tetrahydrofolate + NADH + H(+) = 5-methyluridine(54) in tRNA + (6S)-5,6,7,8-tetrahydrofolate + NAD(+). The enzyme catalyses uridine(54) in tRNA + (6R)-5,10-methylene-5,6,7,8-tetrahydrofolate + NADPH + H(+) = 5-methyluridine(54) in tRNA + (6S)-5,6,7,8-tetrahydrofolate + NADP(+). Its function is as follows. Catalyzes the folate-dependent formation of 5-methyl-uridine at position 54 (M-5-U54) in all tRNAs. This is Methylenetetrahydrofolate--tRNA-(uracil-5-)-methyltransferase TrmFO from Streptococcus equi subsp. zooepidemicus (strain H70).